A 791-amino-acid polypeptide reads, in one-letter code: uncharacterized protein (791 aa).

A helical transmembrane segment spans residues 10–30 (LLTITIGAVAVSSILLGGIFY). The span at 56–76 (NLDYQKARPSIKDNNLKEIPK) shows a compositional bias: basic and acidic residues. The tract at residues 56–175 (NLDYQKARPS…PQPQQIPNQS (120 aa)) is disordered. The segment covering 77–97 (PKPQPKPEPQPTPFPDPIPTP) has biased composition (pro residues). Residues 98-124 (PKKEELKKPEIKPEEPKKPEIKPEPIP) show a composition bias toward basic and acidic residues. Positions 125-139 (KPKPQPIPQPTPPVE) are enriched in pro residues.

The protein to U.parvum UU044.

The protein localises to the membrane. This is an uncharacterized protein from Ureaplasma parvum serovar 3 (strain ATCC 700970).